We begin with the raw amino-acid sequence, 277 residues long: Bifunctional protein FolD (277 aa).

Residues 164-166 (GRS), S189, and T230 each bind NADP(+).

The protein belongs to the tetrahydrofolate dehydrogenase/cyclohydrolase family. In terms of assembly, homodimer.

It carries out the reaction (6R)-5,10-methylene-5,6,7,8-tetrahydrofolate + NADP(+) = (6R)-5,10-methenyltetrahydrofolate + NADPH. The catalysed reaction is (6R)-5,10-methenyltetrahydrofolate + H2O = (6R)-10-formyltetrahydrofolate + H(+). Its pathway is one-carbon metabolism; tetrahydrofolate interconversion. Catalyzes the oxidation of 5,10-methylenetetrahydrofolate to 5,10-methenyltetrahydrofolate and then the hydrolysis of 5,10-methenyltetrahydrofolate to 10-formyltetrahydrofolate. This Clostridium perfringens (strain 13 / Type A) protein is Bifunctional protein FolD.